A 371-amino-acid chain; its full sequence is Leu/Ile/Val-binding protein homolog 2 (371 aa).

Positions 1–23 (MKKSLFCGVCLCALVAMGGTSFA) are cleaved as a signal peptide.

The protein belongs to the leucine-binding protein family.

In terms of biological role, component of an amino-acid transport system. In Brucella abortus (strain 2308), this protein is Leu/Ile/Val-binding protein homolog 2.